The following is a 356-amino-acid chain: Photosystem II protein D1 (356 aa).

3 helical membrane-spanning segments follow: residues 29–46 (YVGW…TATT), 118–133 (HFLI…QWEL), and 142–156 (WICV…AATA). Residue H118 coordinates chlorophyll a. Y126 lines the pheophytin a pocket. Residues D170 and E189 each contribute to the [CaMn4O5] cluster site. The chain crosses the membrane as a helical span at residues 197-218 (FHMLGVAGVFGGSLFSAMHGSL). H198 lines the chlorophyll a pocket. Residues H215 and 264–265 (SF) contribute to the a quinone site. Position 215 (H215) interacts with Fe cation. H272 contributes to the Fe cation binding site. Residues 274-288 (FLGAWPVIGIWFTAM) traverse the membrane as a helical segment. Residues H332, E333, D342, and A344 each coordinate [CaMn4O5] cluster. Positions 345–356 (SAEPVSAPVING) are excised as a propeptide.

Belongs to the reaction center PufL/M/PsbA/D family. As to quaternary structure, PSII is composed of 1 copy each of membrane proteins PsbA, PsbB, PsbC, PsbD, PsbE, PsbF, PsbH, PsbI, PsbJ, PsbK, PsbL, PsbM, PsbT, PsbX, PsbY, PsbZ, Psb30/Ycf12, peripheral proteins PsbO, CyanoQ (PsbQ), PsbU, PsbV and a large number of cofactors. It forms dimeric complexes. Requires The D1/D2 heterodimer binds P680, chlorophylls that are the primary electron donor of PSII, and subsequent electron acceptors. It shares a non-heme iron and each subunit binds pheophytin, quinone, additional chlorophylls, carotenoids and lipids. D1 provides most of the ligands for the Mn4-Ca-O5 cluster of the oxygen-evolving complex (OEC). There is also a Cl(-1) ion associated with D1 and D2, which is required for oxygen evolution. The PSII complex binds additional chlorophylls, carotenoids and specific lipids. as cofactor. Tyr-161 forms a radical intermediate that is referred to as redox-active TyrZ, YZ or Y-Z. In terms of processing, C-terminally processed by CtpA; processing is essential to allow assembly of the oxygen-evolving complex and thus photosynthetic growth.

Its subcellular location is the cellular thylakoid membrane. It carries out the reaction 2 a plastoquinone + 4 hnu + 2 H2O = 2 a plastoquinol + O2. Photosystem II (PSII) is a light-driven water:plastoquinone oxidoreductase that uses light energy to abstract electrons from H(2)O, generating O(2) and a proton gradient subsequently used for ATP formation. It consists of a core antenna complex that captures photons, and an electron transfer chain that converts photonic excitation into a charge separation. The D1/D2 (PsbA/PsbD) reaction center heterodimer binds P680, the primary electron donor of PSII as well as several subsequent electron acceptors. The sequence is that of Photosystem II protein D1 from Crocosphaera subtropica (strain ATCC 51142 / BH68) (Cyanothece sp. (strain ATCC 51142)).